The primary structure comprises 581 residues: Intermediate filament protein ifa-2 (581 aa).

Disordered stretches follow at residues 1–35 (MTDPDSYRSSITSRPSFNRTVTSSSQNYGAPGSGN) and 47–68 (SSVSSGLSPYGQNAASTIRDNR). The segment at 1 to 74 (MTDPDSYRSS…RDNREREKKE (74 aa)) is head. Residues 7-28 (YRSSITSRPSFNRTVTSSSQNY) are compositionally biased toward polar residues. The IF rod domain maps to 71-424 (EKKEIMELND…QMLEGNSEGN (354 aa)). The tract at residues 75–106 (IMELNDRLASYIEKVRFLDAQNRKLDADLKML) is coil 1A. Positions 107-120 (QGRFGKSTGSVKVM) are linker 1. The interval 121-258 (YEMEITTATN…RGFETELKEL (138 aa)) is coil 1B. The segment at 259-276 (QAQAARDTTSENREYFKN) is linker 12. Positions 277–424 (ELANAMRDIR…QMLEGNSEGN (148 aa)) are coil 2. Residues 425-578 (GLRQLVEKVV…THIQRQSQQT (154 aa)) are tail. The tract at residues 449–469 (RVVKGEHSSRTSYQRSAKGNV) is disordered. The region spanning 457–574 (SRTSYQRSAK…EERATHIQRQ (118 aa)) is the LTD domain.

It belongs to the intermediate filament family. As to quaternary structure, forms some heteromeric filaments with ifb-1. As to expression, mainly expressed in regions of the hypodermis adjacent to muscle. Expressed in longitudinal stripes where the mechanosensory neurons interface with the hypodermis. Also expressed to the uterine seam and within the uterine-vulval cells.

It localises to the cell junction. The protein resides in the hemidesmosome. Functionally, cytoplasmic intermediate filaments provide mechanical strength to cells. Essential protein, involved in attachment structures in epidermal cells that connect muscles to the external cuticle. Probably acts by forming hypodermal hemidesmosome complexes that help mediate muscle-cuticle force transduction. Although expressed during embryogenesis, it is not required for embryonic development of muscle-cuticle linkages nor for the localization of other proteins to the hemidesmosomes in embryos. This Caenorhabditis elegans protein is Intermediate filament protein ifa-2.